A 79-amino-acid chain; its full sequence is ATP synthase subunit c (79 aa).

A run of 2 helical transmembrane segments spans residues 11-31 and 53-73; these read MAAAVMMGLAAIGAAIGIGIL and FFIVMGLVDAIPMIAVGLGLY.

It belongs to the ATPase C chain family. In terms of assembly, F-type ATPases have 2 components, F(1) - the catalytic core - and F(0) - the membrane proton channel. F(1) has five subunits: alpha(3), beta(3), gamma(1), delta(1), epsilon(1). F(0) has three main subunits: a(1), b(2) and c(10-14). The alpha and beta chains form an alternating ring which encloses part of the gamma chain. F(1) is attached to F(0) by a central stalk formed by the gamma and epsilon chains, while a peripheral stalk is formed by the delta and b chains.

Its subcellular location is the cell inner membrane. In terms of biological role, f(1)F(0) ATP synthase produces ATP from ADP in the presence of a proton or sodium gradient. F-type ATPases consist of two structural domains, F(1) containing the extramembraneous catalytic core and F(0) containing the membrane proton channel, linked together by a central stalk and a peripheral stalk. During catalysis, ATP synthesis in the catalytic domain of F(1) is coupled via a rotary mechanism of the central stalk subunits to proton translocation. Key component of the F(0) channel; it plays a direct role in translocation across the membrane. A homomeric c-ring of between 10-14 subunits forms the central stalk rotor element with the F(1) delta and epsilon subunits. This Serratia proteamaculans (strain 568) protein is ATP synthase subunit c.